The chain runs to 114 residues: PDZK1-interacting protein 1 (114 aa).

The Extracellular portion of the chain corresponds to 1–28 (MSALSLVILGLLMAVPPASCQQGLGNLQ). A helical membrane pass occupies residues 29–51 (PWMQGLIAVAVFLVLVAIAFAIN). Residues 52 to 114 (HFWCQEEREP…EEGRVHSTPM (63 aa)) are Cytoplasmic-facing. S85 carries the phosphoserine modification. Residues 92-114 (SNEHENAYENTSEEEGRVHSTPM) form a disordered region. The segment covering 105-114 (EEGRVHSTPM) has biased composition (basic and acidic residues).

It belongs to the PDZK1-interacting protein 1/SMIM24 family. As to quaternary structure, forms a heterodimer (via N-terminal transmembrane helix) with SLC5A2/SGLT2 (via TM13); this interaction enhances SLC5A2 transporter activity. Interacts with PDZK1.

The protein localises to the apical cell membrane. Auxiliary protein of electrogenic Na(+)-coupled sugar symporter SLC5A2/SGLT2 and SLC5A1/SGLT1. Essential for the transporter activity of SLC5A2/SGLT2 but not SLC5A1/SGLT1. This Sus scrofa (Pig) protein is PDZK1-interacting protein 1.